Consider the following 416-residue polypeptide: MMTAVSQMSVPSSRILLDVDCRVCEDHSSGKHYSIFSCDGCAGFFKRSIRRHRQYVCKNKGSPSEGQCKVDKTHRNQCRACRLRKCLEIGMNKDAVQHERGPRNSSLRRQQMMFDHGSSPNSPEMGSESDAIILPTSSMNRDTVAGTAARIFFALVGFCQNPLNGVPKERQMTMFQQNWAALLVLHATETRAITSKQIRTETISGSSEQRNAVANAFEIIERLQLDNREYMMLKHFTMWRDTPSAIQIVFQLASIQNFTHRTEPTRYIQCINAIAAIPTTSIIDVLFRPSIGSASMPRLIQDMFKPPQQPTPTSLFPMANFNLNFLLKQEKTETEEGEDIEEEDDATSSNQFDENSSTDDRSVGELDPVQLFLALNSSTQPSSASSPSSSRPRHSIRSITELLSIQEEESVNVEEV.

Positions 18–98 (DVDCRVCEDH…IGMNKDAVQH (81 aa)) form a DNA-binding region, nuclear receptor. 2 NR C4-type zinc fingers span residues 21–41 (CRVC…CDGC) and 57–86 (CKNK…LRKC). A disordered region spans residues 331–398 (KTETEEGEDI…SSRPRHSIRS (68 aa)). Residues 335 to 346 (EEGEDIEEEDDA) are compositionally biased toward acidic residues. Low complexity predominate over residues 377 to 390 (SSTQPSSASSPSSS).

Belongs to the nuclear hormone receptor family. In terms of tissue distribution, expressed in linker cell.

Its subcellular location is the nucleus. Functionally, orphan nuclear receptor that binds DNA containing an extended core motif half-site sequence 5'-AAGTCA-3'. In males, plays an essential role in the migration of the linker cell which guides gonad elongation during the L3 and L4 stages of larval development by negatively regulating the expression of netrin receptor unc-5 at the mid-L3 stage. Involved in the regulation of non-apoptotic cell death in the linker cell, acting upstream of or in parallel to transcription factor hsf-1. Represses hypoxia response genes, fmo-2 and acs-2, in both normoxic and hypoxic conditions, probably acting via repression of nuclear receptor nhr-49. This is Nuclear hormone receptor family member nhr-67 (nhr-67) from Caenorhabditis elegans.